Reading from the N-terminus, the 1288-residue chain is CLIP-associating protein 2 (1288 aa).

The interval 1–62 (MALSLSQDRS…AAKSGASKEG (62 aa)) is disordered. Composition is skewed to low complexity over residues 19–32 (GSRP…FKVP) and 40–62 (ESAS…SKEG). The segment at 62-312 (GAGAVDEEDF…RTLQSCLKSS (251 aa)) is TOG 1. HEAT repeat units lie at residues 174–209 (HGAE…IRHT), 210–246 (HVPR…EWQT), and 251–288 (RHAA…HFPG). 2 disordered regions span residues 314 to 571 (SVAS…SSRL) and 614 to 634 (ANSD…NGSI). 2 stretches are compositionally biased toward low complexity: residues 317 to 337 (SLPQ…RPLS) and 347 to 358 (PAGSKSSGSPAS). Polar residues-rich tracts occupy residues 406 to 421 (KQTL…SQVD) and 468 to 478 (TALSTLSTGAQ). The short motif at 490-493 (SRIP) is the SXIP motif 1 element. Residues 496–518 (QGCSRDSSPTRLSVAPSNISHIY) are compositionally biased toward polar residues. The SXIP motif 2 motif lies at 527 to 530 (SRIP). A compositionally biased stretch (low complexity) spans 616–630 (SDASSACSERSYSSR). A TOG 2 region spans residues 638-889 (MRQTEDVAEV…TKLLQNHLRN (252 aa)). HEAT repeat units lie at residues 718–755 (RVFS…KMGA) and 780–817 (LQFT…QMEP). A compositionally biased stretch (polar residues) spans 891–900 (GNTAQASIGS). 2 disordered regions span residues 891-936 (GNTA…FDYD) and 960-1047 (SVRS…DSGV). The span at 912-931 (SWSSPLTSPTNTSQNTPSPS) shows a compositional bias: low complexity. A compositionally biased stretch (basic and acidic residues) spans 963 to 977 (SQEDMTEPPRKREGD). Residues 1019–1030 (SDSSFGSSSFNK) are compositionally biased toward low complexity. Acidic residues predominate over residues 1036–1046 (DQEESLTDDSG). 4 HEAT repeats span residues 1047-1086 (VDQS…ETQL), 1091-1128 (EHFK…RQPW), 1167-1204 (ISPD…RLPK), and 1209-1246 (QMLP…VIGE).

It belongs to the CLASP family. As to quaternary structure, interacts with microtubules.

It is found in the cytoplasm. Its subcellular location is the cytoskeleton. The protein resides in the microtubule organizing center. The protein localises to the centrosome. It localises to the chromosome. It is found in the centromere. Its subcellular location is the kinetochore. The protein resides in the spindle. The protein localises to the golgi apparatus. It localises to the trans-Golgi network. It is found in the cell membrane. Its subcellular location is the cell projection. The protein resides in the ruffle membrane. In terms of biological role, microtubule plus-end tracking protein that promotes the stabilization of dynamic microtubules. Involved in the nucleation of noncentrosomal microtubules originating from the trans-Golgi network (TGN). Required for the polarization of the cytoplasmic microtubule arrays in migrating cells towards the leading edge of the cell. May act at the cell cortex to enhance the frequency of rescue of depolymerizing microtubules. This cortical microtubule stabilizing activity is regulated at least in part by phosphatidylinositol 3-kinase signaling. Also performs a similar stabilizing function at the kinetochore which is essential for the bipolar alignment of chromosomes on the mitotic spindle. The protein is CLIP-associating protein 2 (clasp2) of Danio rerio (Zebrafish).